We begin with the raw amino-acid sequence, 68 residues long: Toxin Cg2 (68 aa).

Residues 1–66 enclose the LCN-type CS-alpha/beta domain; the sequence is KDGYLVNKST…VYPIPGKTCS (66 aa). Cystine bridges form between C12/C65, C16/C41, C25/C46, and C29/C48.

This sequence belongs to the long (4 C-C) scorpion toxin superfamily. Sodium channel inhibitor family. In terms of tissue distribution, expressed by the venom gland.

It is found in the secreted. Functionally, binds to sodium channels (Nav) and inhibits them. The protein is Toxin Cg2 of Centruroides gracilis (Slenderbrown scorpion).